Reading from the N-terminus, the 129-residue chain is Sulfurtransferase TusD (129 aa).

The active-site Cysteine persulfide intermediate is the C79.

This sequence belongs to the DsrE/TusD family. Heterohexamer, formed by a dimer of trimers. The hexameric TusBCD complex contains 2 copies each of TusB, TusC and TusD. The TusBCD complex interacts with TusE.

It is found in the cytoplasm. Functionally, part of a sulfur-relay system required for 2-thiolation of 5-methylaminomethyl-2-thiouridine (mnm(5)s(2)U) at tRNA wobble positions. Accepts sulfur from TusA and transfers it in turn to TusE. The sequence is that of Sulfurtransferase TusD from Pectobacterium carotovorum subsp. carotovorum (strain PC1).